A 600-amino-acid polypeptide reads, in one-letter code: Polypeptide N-acetylgalactosaminyltransferase (600 aa).

Over 1–7 (MVRRKLR) the chain is Cytoplasmic. Residues 8-28 (LLVILAGIWLVGIVVYLFKGD) traverse the membrane as a helical; Signal-anchor for type II membrane protein segment. Over 29-600 (DQSEFEKRVI…KWTFSLSKNR (572 aa)) the chain is Lumenal. Disulfide bonds link Cys-154/Cys-382, Cys-373/Cys-451, Cys-484/Cys-501, Cys-524/Cys-541, and Cys-567/Cys-583. The tract at residues 163-268 (LPDTSVIITF…EKWLEPLLDR (106 aa)) is catalytic subdomain A. Substrate-binding residues include Thr-171, Asp-204, and Arg-229. Asp-252 lines the Mn(2+) pocket. Substrate is bound at residue Ser-253. His-254 provides a ligand contact to Mn(2+). A catalytic subdomain B region spans residues 328-390 (PIRTPMIAGG…PCSRVGHVFR (63 aa)). Trp-359 contacts substrate. A Mn(2+)-binding site is contributed by His-387. Arg-390, His-393, and Tyr-395 together coordinate substrate. The 130-residue stretch at 466–595 (KIPSVQDIAF…SSYTQKWTFS (130 aa)) folds into the Ricin B-type lectin domain.

This sequence belongs to the glycosyltransferase 2 family. GalNAc-T subfamily. Mn(2+) serves as cofactor. Post-translationally, O-glycosylated.

It localises to the golgi apparatus membrane. The catalysed reaction is L-seryl-[protein] + UDP-N-acetyl-alpha-D-galactosamine = a 3-O-[N-acetyl-alpha-D-galactosaminyl]-L-seryl-[protein] + UDP + H(+). The enzyme catalyses L-threonyl-[protein] + UDP-N-acetyl-alpha-D-galactosamine = a 3-O-[N-acetyl-alpha-D-galactosaminyl]-L-threonyl-[protein] + UDP + H(+). It functions in the pathway protein modification; protein glycosylation. No change in activity by addition of up to 10% methanol or glycerol, or 5% acetonitrile. 40% reduction in activity by 10% acetonitrile or by lyophilization. Activity requires divalent cations, the best being Mn(2+) (10-20 mM), followed by Co(2+), Mg(2+) and Ca(2+). Loss of activity with Cu(2+) or in the presence of EDTA. Inhibited by UDP, but not by UMP, UTP, ADP or GDP nucleotides. No inhibition by galactose, N-acetylglucosamine or N-acetylgalactosamine sugars. Catalyzes the initial reaction in O-linked oligosaccharide biosynthesis, the transfer of an N-acetyl-D-galactosamine residue to a serine or threonine residue on the protein receptor. Has a broad substrate specificity. Acceptor peptides include Muc2, Muc5Ac, Muc1a and Muc1a', with Muc2 as the best acceptor. Acts on non-glycosylated and mono- or multi-glycosylated peptide substrates. Transfers preferably to threonine rather than serine residue. Thr-15 is the most preferred site of glycosylation in Muc2 peptide PTTTPITTTTTVTPTPTPTGTQTK having proline residues at position -1, and at positions +1 and +3, where the number represents the distance from the C-terminal and N-terminal hydroxyl amino acid, respectively. Transfer of the N-acetyl-D-galactosamine (GalNAc) is optimal with proline residues at positions -3, -1, +1 and +3, but other amino acids are tolerated, although some, such as phenylalanine, isoleucine or leucine at -1, or lysine at +3 prevent the transfer completely. Second GalNAc is transferred to Muc2 Thr-2 or Thr-13, both of which have two proline residues nearby. Up to nine sites can be glycosylated within Muc2, but eight are used simultaneously since Thr-19 and Thr-21 are not detected to be glycosylated at the same time. Glycosylation is not detected of a potential site, which is next to an already glycosylated site, but only one amino acid is needed in between two glycosylation sites. Ser-5 is the preferred glycosylation site in Muc5Ac peptide GTTPSPVPTTSTTSAP into which up to four GalNAcs can be attached. Only the threonine residues are detected as pontential glycosylation sites in Muc1a APPAHGVTSAPDTRPAPGC and Muc1a' AHGVTSAPDTR peptides. Transferase activity is restricted to UDP-GalNAc as a donor, and none of the nucleotide sugars UDP-Gal, UDP-GlcNAc, GDP-fucose, UDP-xylose, UDP-glucuronic acid or CMP-neuraminic acid are utilized as donors. The sequence is that of Polypeptide N-acetylgalactosaminyltransferase from Biomphalaria glabrata (Bloodfluke planorb).